The primary structure comprises 115 residues: NADH-ubiquinone oxidoreductase chain 3 (115 aa).

Transmembrane regions (helical) follow at residues 3 to 23 (LLII…IAFW), 55 to 75 (FFLV…LLPL), and 86 to 106 (TMMA…SYEW).

The protein belongs to the complex I subunit 3 family. Core subunit of respiratory chain NADH dehydrogenase (Complex I) which is composed of 45 different subunits. Interacts with TMEM186. Interacts with TMEM242.

The protein localises to the mitochondrion inner membrane. It carries out the reaction a ubiquinone + NADH + 5 H(+)(in) = a ubiquinol + NAD(+) + 4 H(+)(out). Its function is as follows. Core subunit of the mitochondrial membrane respiratory chain NADH dehydrogenase (Complex I) which catalyzes electron transfer from NADH through the respiratory chain, using ubiquinone as an electron acceptor. Essential for the catalytic activity of complex I. The sequence is that of NADH-ubiquinone oxidoreductase chain 3 from Rattus norvegicus (Rat).